We begin with the raw amino-acid sequence, 2362 residues long: Filaggrin-2 (2362 aa).

Positions 1 to 81 are S-100-like; sequence MAYLLRSVVT…TEFILMIFKL (81 aa). 2 consecutive EF-hand domains span residues 8-43 and 49-84; these read VVTI…EFRP and DDPD…LALA. Ca(2+) contacts are provided by D62, D64, D66, R68, and E73. Disordered stretches follow at residues 96–238 and 284–2109; these read ASGS…GLSC and GCCR…SSIP. The segment covering 111–120 has biased composition (acidic residues); it reads EESETEEEEE. Basic and acidic residues-rich tracts occupy residues 159–174 and 189–214; these read KRLE…EESR and NKEK…PSRE. 2 Filaggrin repeats span residues 261-308 and 373-414; these read GYNT…NQSC and HSSC…SNGF. 3 stretches are compositionally biased toward polar residues: residues 284-317, 342-375, and 383-395; these read GCCR…CQSG, SCSQ…SHSS, and GATQ…QQRM. Over residues 396 to 411 the composition is skewed to low complexity; sequence SSCGHSSSSHQKGCSS. 2 stretches are compositionally biased toward polar residues: residues 421–443 and 450–469; these read ASGS…SSGF and SGQS…SGYS. Low complexity-rich tracts occupy residues 474–519, 539–550, and 567–580; these read GSGQ…QSSG, GSRQSSGSEQHG, and SQSS…SGSQ. A Filaggrin 3 repeat occupies 555–607; sequence QSSGSGKHETGPSQSSSSGHHGSGSQQHGGGSGQSTGFGEHESSSGHSSSSGQ. Positions 581-590 are enriched in gly residues; sequence QHGGGSGQST. Low complexity predominate over residues 599 to 618; that stretch reads SGHSSSSGQHRSGSRHSSGS. Residues 632–653 show a composition bias toward gly residues; sequence GHHGSGSQQHGGGSGNSTGFGE. Positions 654-675 are enriched in low complexity; sequence HGSSSHPLPSSGQNESSSGQSS. A Filaggrin 4 repeat occupies 672-723; sequence GQSSRSERHGTGSGQSSGFGQHGSGSHQSSSSGHNEYGSGQTSSSWPHGKGS. Residues 682–694 show a composition bias toward gly residues; it reads TGSGQSSGFGQHG. Low complexity-rich tracts occupy residues 695 to 705, 728 to 754, and 780 to 798; these read SGSHQSSSSGH, GYGE…QSSS, and GYGE…WQHG. Over residues 826-838 the composition is skewed to gly residues; that stretch reads TGSGQSLGFGQHG. Residues 846 to 864 show a composition bias toward low complexity; that stretch reads SSGHYESVSEPSSSSWQHG. One copy of the Filaggrin 5 repeat lies at 880 to 927; sequence HGQSSSAWNHGNESGQSNGYGEHESGHGQSSSAWNHGNESGQSNGFGE. Composition is skewed to polar residues over residues 886–896 and 912–925; these read AWNHGNESGQS and AWNH…SNGF. The segment covering 973-982 has biased composition (basic and acidic residues); it reads ESSEGEEHSV. One copy of the Filaggrin 6 repeat lies at 984–1035; that stretch reads PRRYSGYGHGQGQAGHQQRESGYGQRGRPQGPSQDSSRQPQAGHGQPSQSGY. A compositionally biased stretch (polar residues) spans 1014 to 1035; that stretch reads GPSQDSSRQPQAGHGQPSQSGY. Residues 1047 to 1059 are compositionally biased toward basic and acidic residues; the sequence is EYSEGEAHSEVSQ. Over residues 1067–1077 the composition is skewed to basic residues; it reads CHCHCHGQARH. Over residues 1104 to 1121 the composition is skewed to low complexity; the sequence is GPGQPSQSGSRRSPRSQP. The segment covering 1142 to 1152 has biased composition (gly residues); sequence SGHGHGQGQGQ. Residues 1162–1174 show a composition bias toward polar residues; the sequence is HGQQGRPQGPSQD. The stretch at 1165 to 1210 is one Filaggrin 7 repeat; the sequence is QGRPQGPSQDSSRQPQAGQGQPSQSGSGRSPRRSPVHPESSEGEEH. Low complexity predominate over residues 1175 to 1193; it reads SSRQPQAGQGQPSQSGSGR. 3 positions are modified to phosphoserine: S1198, S1204, and S1205. Over residues 1220 to 1232 the composition is skewed to gly residues; sequence SGHGHGQGQGQGQ. Residues 1255–1273 show a composition bias toward low complexity; that stretch reads SSRQPQAGQGQPSQSGSGR. A phosphoserine mark is found at S1278, S1284, and S1285. The Filaggrin 8 repeat unit spans residues 1280 to 1334; it reads VHPESSEGEEHSVVPQRHSGSGHGHGQGQGQAGHQQRESVHGQPVRPEVPTQDSS. Positions 1300-1310 are enriched in gly residues; that stretch reads SGHGHGQGQGQ. Positions 1333–1351 are enriched in low complexity; that stretch reads SSRQPQAGQGQPSQSGSGR. Phosphoserine occurs at positions 1356, 1362, and 1363. Residues 1377-1396 show a composition bias toward basic and acidic residues; the sequence is ESCHCHCHDQAGHQQRESVH. Residues 1413 to 1436 are compositionally biased toward low complexity; it reads PQAGPGQPSQSGSRRSPRSSPVHP. Residues S1438 and S1439 each carry the phosphoserine modification. The segment covering 1454–1464 has biased composition (gly residues); the sequence is SGHGHGQGQGQ. A Filaggrin 9 repeat occupies 1474–1522; the sequence is HGQRGRPQGPTQDSSRQPQAGQGQPSQSGSGRSPRRSPVHPESSEGEEH. Residues 1487 to 1505 show a composition bias toward low complexity; it reads SSRQPQAGQGQPSQSGSGR. Phosphoserine occurs at positions 1510, 1516, and 1517. The span at 1532–1544 shows a compositional bias: gly residues; the sequence is SGHGHGHGQGQGQ. Residues 1567–1585 are compositionally biased toward low complexity; the sequence is SSRQPQAGQGQPSQSGSGR. Phosphoserine is present on residues S1590, S1596, and S1597. Low complexity-rich tracts occupy residues 1643–1661 and 1683–1696; these read SSRQ…GSGR and QRHS…GQGQ. The span at 1698-1708 shows a compositional bias: basic and acidic residues; the sequence is HAEHQQRESVH. Residues 1723 to 1756 form a Filaggrin 10 repeat; that stretch reads RQPQAGQGQPSLSGSGRSPRRSPVHPESSEGEEH. Over residues 1724–1739 the composition is skewed to low complexity; that stretch reads QPQAGQGQPSLSGSGR. A phosphoserine mark is found at S1744, S1750, S1751, S1824, S1830, and S1831. The span at 1801-1825 shows a compositional bias: low complexity; that stretch reads SSRQPQAGQGQPSQSGSGRSPGRSP. A compositionally biased stretch (basic and acidic residues) spans 1829–1848; the sequence is ESSEGEEHSVVPQRHSESGH. Low complexity predominate over residues 1879-1897; that stretch reads SSRQPQAGQGQPSQSGSGR. Phosphoserine occurs at positions 1902, 1908, and 1909. Gly residues predominate over residues 1924–1934; sequence SGHGHGQGQGQ. Low complexity predominate over residues 1949 to 1975; the sequence is RPQGPSQDSSSQPQASQGQPSQSGSGR. S1980, S1986, and S1987 each carry phosphoserine. Residues 2002-2012 are compositionally biased toward gly residues; the sequence is SGHGHGQGQGQ. The Filaggrin 11 repeat unit spans residues 2016-2070; sequence QQRESLHGQRGRSQSPFHPSHSIHWQSKCTISKKSSRLSGHYGRNHFQSTISGNQ. 3 stretches are compositionally biased toward polar residues: residues 2026–2048, 2061–2079, and 2100–2109; these read GRSQ…TISK, HFQS…SSRH, and LRSNSQSSIP. A Phosphoserine modification is found at S2104. The stretch at 2218-2259 is one Filaggrin 12 repeat; the sequence is DDSQYILFQKHLESPSFGNQSGFSPNERQLYTCNESIDSYHL.

This sequence belongs to the S100-fused protein family. In the N-terminal section; belongs to the S-100 family. Post-translationally, deiminated by PADI1, PADI2 or PADI3 in vitro. The deiminated form is degraded by calpain-1/CAPN1 more quickly and into shorter peptides than the intact protein. May be processed by calpain-1/CAPN1.

The protein localises to the cytoplasm. It localises to the cytoplasmic granule. Essential for normal cell-cell adhesion in the cornified cell layers. Important for proper integrity and mechanical strength of the stratum corneum of the epidermis. The sequence is that of Filaggrin-2 (Flg2) from Mus musculus (Mouse).